Here is a 255-residue protein sequence, read N- to C-terminus: 2-(S)-hydroxypropyl-CoM dehydrogenase 3 (255 aa).

Residues Ile19, Asp38, 64–65, and Asn91 each bind NAD(+); that span reads DV. 2 residues coordinate (S)-2-hydroxypropyl-coenzyme M: Ser143 and Tyr156. Tyr156 (proton acceptor) is an active-site residue. NAD(+) is bound at residue Lys160. A (S)-2-hydroxypropyl-coenzyme M-binding site is contributed by Thr188. 189–193 contributes to the NAD(+) binding site; that stretch reads VTSTG. Residue Tyr215 participates in (S)-2-hydroxypropyl-coenzyme M binding.

It belongs to the short-chain dehydrogenases/reductases (SDR) family. As to quaternary structure, homotetramer.

It catalyses the reaction (S)-2-hydroxypropyl-coenzyme M + NAD(+) = 2-oxopropyl-coenzyme M + NADH + H(+). Its activity is regulated as follows. Not inhibited by 2-(2-methyl-2-hydroxypropylthio)ethanesulfonate (M-HPC), an achiral analog of both R-HPC and S-HPC. In terms of biological role, involved in aliphatic epoxide carboxylation. Catalyzes the reversible oxidation of (2S)-2-hydroxypropyl-coenzyme M (S-HPC) to 2-oxopropyl-coenzyme M (2-KPC). The enzyme is highly specific for the S enantiomers. In vitro can also use the aliphatic ketone 2-butanone and the aliphatic alcohol 2-propanol, and shows an inherent stereoselectivity for 2-butanone reduction. The protein is 2-(S)-hydroxypropyl-CoM dehydrogenase 3 of Xanthobacter autotrophicus (strain ATCC BAA-1158 / Py2).